A 301-amino-acid chain; its full sequence is MGRTRKGRAISGWLVVDKPAGMTSTAVVNKVRWALEAQKAGHAGTLDPDATGVLAVALGEATKTVPYITDALKCYRFMVRLGLSTRTDDASGEVIATSEARPTDAEIEAALAAFRGEIQQVPPQFSAVKVEGERAYDLARDGERLDLAARPLWVESLEILSRPDADHVELEMVCGKGGYVRSIARDLGEALGCHGHVAWLRRTWSGPFEAEDGISVATIDELARSEALLSHVLPLAKGLADLPELPATPEGAARLRCGNPGMVIASDVEFGEEAWASFQGQPVAVGIYKSGELHPSRVFNL.

The active-site Nucleophile is Asp47.

This sequence belongs to the pseudouridine synthase TruB family. Type 1 subfamily.

It catalyses the reaction uridine(55) in tRNA = pseudouridine(55) in tRNA. Its function is as follows. Responsible for synthesis of pseudouridine from uracil-55 in the psi GC loop of transfer RNAs. The chain is tRNA pseudouridine synthase B from Cereibacter sphaeroides (strain ATCC 17023 / DSM 158 / JCM 6121 / CCUG 31486 / LMG 2827 / NBRC 12203 / NCIMB 8253 / ATH 2.4.1.) (Rhodobacter sphaeroides).